Here is a 387-residue protein sequence, read N- to C-terminus: Cytochrome b (387 aa).

4 helical membrane passes run phenylalanine 32–cysteine 52, phenylalanine 76–glycine 98, threonine 113–cysteine 133, and phenylalanine 179–isoleucine 199. Heme b-binding residues include histidine 82 and histidine 96. Heme b is bound by residues histidine 183 and histidine 197. Histidine 202 provides a ligand contact to a ubiquinone. A run of 4 helical transmembrane segments spans residues tyrosine 225–phenylalanine 245, glutamine 289–aspartate 309, phenylalanine 321–glycine 341, and phenylalanine 348–proline 368.

Belongs to the cytochrome b family. As to quaternary structure, fungal cytochrome b-c1 complex contains 10 subunits; 3 respiratory subunits, 2 core proteins and 5 low-molecular weight proteins. Cytochrome b-c1 complex is a homodimer. Heme b is required as a cofactor.

It localises to the mitochondrion inner membrane. Functionally, component of the ubiquinol-cytochrome c reductase complex (complex III or cytochrome b-c1 complex) that is part of the mitochondrial respiratory chain. The b-c1 complex mediates electron transfer from ubiquinol to cytochrome c. Contributes to the generation of a proton gradient across the mitochondrial membrane that is then used for ATP synthesis. The polypeptide is Cytochrome b (cob) (Schizosaccharomyces pombe (strain 972 / ATCC 24843) (Fission yeast)).